The chain runs to 258 residues: Indole-3-glycerol phosphate synthase (258 aa).

It belongs to the TrpC family.

It catalyses the reaction 1-(2-carboxyphenylamino)-1-deoxy-D-ribulose 5-phosphate + H(+) = (1S,2R)-1-C-(indol-3-yl)glycerol 3-phosphate + CO2 + H2O. It functions in the pathway amino-acid biosynthesis; L-tryptophan biosynthesis; L-tryptophan from chorismate: step 4/5. In Campylobacter jejuni subsp. jejuni serotype O:23/36 (strain 81-176), this protein is Indole-3-glycerol phosphate synthase.